The following is a 750-amino-acid chain: Photosystem I P700 chlorophyll a apoprotein A1 (750 aa).

Helical transmembrane passes span 70–93 (VFSA…FHGA), 156–179 (LYCT…FHYH), 195–219 (LNHH…HVSL), 291–309 (IAHH…GHMY), 346–369 (WHAQ…HHMY), 385–411 (LSLF…IFMV), 433–455 (AIIS…LYIH), and 531–549 (FLVH…LILL). Positions 573 and 582 each coordinate [4Fe-4S] cluster. Transmembrane regions (helical) follow at residues 589–610 (HVFL…HFSW) and 664–686 (LSAY…MFLF). Residue histidine 675 coordinates chlorophyll a'. Chlorophyll a-binding residues include methionine 683 and tyrosine 691. Position 692 (tryptophan 692) interacts with phylloquinone. Residues 724-744 (TVGVTHYLLGGIATTWAFFLA) form a helical membrane-spanning segment.

The protein belongs to the PsaA/PsaB family. As to quaternary structure, the PsaA/B heterodimer binds the P700 chlorophyll special pair and subsequent electron acceptors. PSI consists of a core antenna complex that captures photons, and an electron transfer chain that converts photonic excitation into a charge separation. The eukaryotic PSI reaction center is composed of at least 11 subunits. It depends on P700 is a chlorophyll a/chlorophyll a' dimer, A0 is one or more chlorophyll a, A1 is one or both phylloquinones and FX is a shared 4Fe-4S iron-sulfur center. as a cofactor.

The protein localises to the plastid. The protein resides in the chloroplast thylakoid membrane. The enzyme catalyses reduced [plastocyanin] + hnu + oxidized [2Fe-2S]-[ferredoxin] = oxidized [plastocyanin] + reduced [2Fe-2S]-[ferredoxin]. In terms of biological role, psaA and PsaB bind P700, the primary electron donor of photosystem I (PSI), as well as the electron acceptors A0, A1 and FX. PSI is a plastocyanin-ferredoxin oxidoreductase, converting photonic excitation into a charge separation, which transfers an electron from the donor P700 chlorophyll pair to the spectroscopically characterized acceptors A0, A1, FX, FA and FB in turn. Oxidized P700 is reduced on the lumenal side of the thylakoid membrane by plastocyanin. The polypeptide is Photosystem I P700 chlorophyll a apoprotein A1 (Oenothera elata subsp. hookeri (Hooker's evening primrose)).